The sequence spans 777 residues: Intraflagellar transport protein 80 homolog (777 aa).

7 WD repeats span residues 12–50, 104–143, 145–185, 186–225, 227–265, 267–306, and 504–542; these read KHQE…TSLI, AHCG…RSTL, QQGT…LQWK, AHDG…LYGS, PHEH…YALE, PNTG…WEWK, and KLGT…YVDR.

In terms of assembly, component of the IFT complex B, at least composed of IFT20, IFT22, IFT25, IFT27, IFT46, IFT52, TRAF3IP1/IFT54, IFT57, IFT74, IFT80, IFT81, and IFT88. Interacts with IFT88. Interacts with IFT57 and IFT70B.

Its subcellular location is the cytoplasm. The protein resides in the cytoskeleton. It is found in the cilium basal body. The protein localises to the cilium axoneme. In terms of biological role, component of the intraflagellar transport (IFT) complex B, which is essential for the development and maintenance of motile and sensory cilia. The protein is Intraflagellar transport protein 80 homolog (Ift80) of Mus musculus (Mouse).